The following is a 395-amino-acid chain: Probable eukaryotic translation initiation factor 5 (395 aa).

28–35 contacts GTP; that stretch reads GKGNGIKT. Disordered regions lie at residues 146–171 and 374–395; these read PPAK…AEDE and LAEA…DDDE. Positions 147–157 are enriched in basic residues; it reads PAKKKSHKHKR. Composition is skewed to acidic residues over residues 161–170 and 377–395; these read VAEEEDGAED and ASDE…DDDE. Residues 228 to 384 form the W2 domain; it reads EEAESSRYDQ…AEASDESESE (157 aa).

Belongs to the eIF-2-beta/eIF-5 family. Monomer.

Functionally, catalyzes the hydrolysis of GTP bound to the 40S ribosomal initiation complex (40S.mRNA.Met-tRNA[F].eIF-2.GTP) with the subsequent joining of a 60S ribosomal subunit resulting in the release of eIF-2 and the guanine nucleotide. The subsequent joining of a 60S ribosomal subunit results in the formation of a functional 80S initiation complex (80S.mRNA.Met-tRNA[F]). The polypeptide is Probable eukaryotic translation initiation factor 5 (tif5) (Schizosaccharomyces pombe (strain 972 / ATCC 24843) (Fission yeast)).